We begin with the raw amino-acid sequence, 175 residues long: Bifunctional protein PyrR (175 aa).

Positions 97 to 109 match the PRPP-binding motif; sequence IVLIDDVLFTGRT.

This sequence belongs to the purine/pyrimidine phosphoribosyltransferase family. PyrR subfamily. As to quaternary structure, homodimer and homohexamer; in equilibrium.

It carries out the reaction UMP + diphosphate = 5-phospho-alpha-D-ribose 1-diphosphate + uracil. Regulates transcriptional attenuation of the pyrimidine nucleotide (pyr) operon by binding in a uridine-dependent manner to specific sites on pyr mRNA. This disrupts an antiterminator hairpin in the RNA and favors formation of a downstream transcription terminator, leading to a reduced expression of downstream genes. Its function is as follows. Also displays a weak uracil phosphoribosyltransferase activity which is not physiologically significant. In Leuconostoc mesenteroides subsp. mesenteroides (strain ATCC 8293 / DSM 20343 / BCRC 11652 / CCM 1803 / JCM 6124 / NCDO 523 / NBRC 100496 / NCIMB 8023 / NCTC 12954 / NRRL B-1118 / 37Y), this protein is Bifunctional protein PyrR.